Here is a 415-residue protein sequence, read N- to C-terminus: MLDKLQPLRGMKDLLPDDYKVHDYIINKARDVGVLYGYKQMSTPILEYTKVFNRSMGESSDIISKEIYSFLDKSNESVALRPEFTAGIIRSFISNNLRHKLPLKFFSTGPIFRYDRPQAGRQRQFHQLNYEYIGAKGAMTDAETLKLAVDILKALEIEQDTTLELNSLGCSESRSVYQQKLVEYLNDFKNQLSEESRVRLIKNPMRILDSKNEIDQKIVAAAPILSEYYTDESKEYFEDLIKYLNILGVKYRINPRLVRGLDYYCHTAFEFTTLKLGTQSTILAGGRYDGLAKIMGNNDDMPAIGFAAGIERIALMREYNVSLLSLVVVLPIGKNNICYALEIVDKLRTKNIATIIEPTGKIAKRMQRVLNENAKFIIFIGDEEQANNNLKLKDLETQEEYILDFAKTLELLKKY.

It belongs to the class-II aminoacyl-tRNA synthetase family. Homodimer.

It localises to the cytoplasm. The catalysed reaction is tRNA(His) + L-histidine + ATP = L-histidyl-tRNA(His) + AMP + diphosphate + H(+). The polypeptide is Histidine--tRNA ligase (Rickettsia canadensis (strain McKiel)).